Reading from the N-terminus, the 937-residue chain is Bifunctional glutamine synthetase adenylyltransferase/adenylyl-removing enzyme (937 aa).

The adenylyl removase stretch occupies residues methionine 1–proline 436. The interval proline 443 to alanine 937 is adenylyl transferase.

It belongs to the GlnE family. It depends on Mg(2+) as a cofactor.

The enzyme catalyses [glutamine synthetase]-O(4)-(5'-adenylyl)-L-tyrosine + phosphate = [glutamine synthetase]-L-tyrosine + ADP. It carries out the reaction [glutamine synthetase]-L-tyrosine + ATP = [glutamine synthetase]-O(4)-(5'-adenylyl)-L-tyrosine + diphosphate. Involved in the regulation of glutamine synthetase GlnA, a key enzyme in the process to assimilate ammonia. When cellular nitrogen levels are high, the C-terminal adenylyl transferase (AT) inactivates GlnA by covalent transfer of an adenylyl group from ATP to specific tyrosine residue of GlnA, thus reducing its activity. Conversely, when nitrogen levels are low, the N-terminal adenylyl removase (AR) activates GlnA by removing the adenylyl group by phosphorolysis, increasing its activity. The regulatory region of GlnE binds the signal transduction protein PII (GlnB) which indicates the nitrogen status of the cell. The sequence is that of Bifunctional glutamine synthetase adenylyltransferase/adenylyl-removing enzyme from Xanthomonas campestris pv. campestris (strain ATCC 33913 / DSM 3586 / NCPPB 528 / LMG 568 / P 25).